Here is a 192-residue protein sequence, read N- to C-terminus: Iron sulfur cluster assembly protein 1, mitochondrial (192 aa).

Residues 1-53 (MSVFRRSVQCVGVLPSILAQRSSLLARPANLQFLKTNSSKFVPQVTANVSRRM) constitute a mitochondrion transit peptide.

The protein belongs to the NifU family. Homodimer. Component of the core Fe-S cluster (ISC) assembly machinery. [2Fe-2S] cluster serves as cofactor.

It localises to the mitochondrion. The protein resides in the mitochondrion matrix. The protein operates within cofactor biosynthesis; iron-sulfur cluster biosynthesis. Functionally, scaffold protein for the de novo synthesis of iron-sulfur (Fe-S) clusters within mitochondria, which is required for maturation of both mitochondrial and cytoplasmic [2Fe-2S] and [4Fe-4S] proteins. First, a [2Fe-2S] cluster is transiently assembled on the scaffold protein isu1. In a second step, the cluster is released from isu1, transferred to a glutaredoxin, followed by the formation of mitochondrial [2Fe-2S] proteins, the synthesis of [4Fe-4S] clusters and their target-specific insertion into the recipient apoproteins. Cluster assembly on isu1 depends on the function of the cysteine desulfurase complex nfs1-isd11, which serves as the sulfur donor for cluster synthesis, the iron-binding protein frataxin as the putative iron donor, and the electron transfer chain comprised of ferredoxin reductase and ferredoxin, which receive their electrons from NADH. In Schizosaccharomyces pombe (strain 972 / ATCC 24843) (Fission yeast), this protein is Iron sulfur cluster assembly protein 1, mitochondrial (isu1).